The sequence spans 315 residues: Hydrogenase-4 component C (315 aa).

Residues 1–10 lie on the Periplasmic side of the membrane; that stretch reads MRQTLCDGYL. Residues 11–31 traverse the membrane as a helical segment; that stretch reads VIFALAQAVILLMLTPLFTGI. The Cytoplasmic portion of the chain corresponds to 32–73; that stretch reads SRQIRARMHSRRGPGIWQDYRDIHKLFKRQEVAPTSSGLMFR. Residues 74–94 traverse the membrane as a helical segment; it reads LMPWVLISSMLVLAMALPLFI. Residues 95–98 are Periplasmic-facing; it reads TVSP. The chain crosses the membrane as a helical span at residues 99–119; the sequence is FAGGGDLITLIYLLALFRFFF. The Cytoplasmic segment spans residues 120–140; it reads ALSGLDTGSPFAGVGASRELT. Residues 141-161 form a helical membrane-spanning segment; it reads LGILVEPMLILSLLVLALIAG. Residues 162 to 181 lie on the Periplasmic side of the membrane; it reads STHIEMISNTLAMGWNSPLT. Residues 182–202 form a helical membrane-spanning segment; sequence TVLALLACGFACFIEMGKIPF. Residues 203–228 lie on the Cytoplasmic side of the membrane; sequence DVAEAEQELQEGPLTEYSGAGLALAK. A helical transmembrane segment spans residues 229–249; it reads WGLGLKQVVMASLFVALFLPF. The Periplasmic segment spans residues 250-256; the sequence is GRAQELS. A helical membrane pass occupies residues 257–277; it reads LACLLTSLVVTLLKVLLIFVL. Over 278–289 the chain is Cytoplasmic; that stretch reads ASIAENTLARGR. Residues 290–310 traverse the membrane as a helical segment; that stretch reads FLLIHHVTWLGFSLAALAWVF. Topologically, residues 311 to 315 are periplasmic; that stretch reads WLTGL.

This sequence belongs to the complex I subunit 1 family.

Its subcellular location is the cell inner membrane. Functionally, possible component of hydrogenase 4. The sequence is that of Hydrogenase-4 component C from Escherichia coli (strain K12).